Reading from the N-terminus, the 292-residue chain is Glyoxylase B2 (292 aa).

Zn(2+)-binding residues include His72, His74, Asp76, His77, His148, and Asp166. Substrate-binding positions include 175 to 181, 208 to 210, and 284 to 287; these read TARCDFP, HDY, and KIPL. A Zn(2+)-binding site is contributed by His208.

Belongs to the metallo-beta-lactamase superfamily. Glyoxalase II family. Zn(2+) is required as a cofactor.

In Dictyostelium discoideum (Social amoeba), this protein is Glyoxylase B2 (gloB2).